We begin with the raw amino-acid sequence, 266 residues long: 4-hydroxy-tetrahydrodipicolinate reductase (266 aa).

Residue 10–15 (GPRGRM) coordinates NAD(+). Position 38 (lysine 38) interacts with NADP(+). NAD(+) is bound by residues 99–101 (GTT) and 125–128 (APNF). Histidine 155 serves as the catalytic Proton donor/acceptor. Residue histidine 156 participates in (S)-2,3,4,5-tetrahydrodipicolinate binding. Residue lysine 159 is the Proton donor of the active site. 165–166 (GT) is a binding site for (S)-2,3,4,5-tetrahydrodipicolinate.

It belongs to the DapB family.

Its subcellular location is the cytoplasm. It catalyses the reaction (S)-2,3,4,5-tetrahydrodipicolinate + NAD(+) + H2O = (2S,4S)-4-hydroxy-2,3,4,5-tetrahydrodipicolinate + NADH + H(+). It carries out the reaction (S)-2,3,4,5-tetrahydrodipicolinate + NADP(+) + H2O = (2S,4S)-4-hydroxy-2,3,4,5-tetrahydrodipicolinate + NADPH + H(+). The protein operates within amino-acid biosynthesis; L-lysine biosynthesis via DAP pathway; (S)-tetrahydrodipicolinate from L-aspartate: step 4/4. Functionally, catalyzes the conversion of 4-hydroxy-tetrahydrodipicolinate (HTPA) to tetrahydrodipicolinate. The chain is 4-hydroxy-tetrahydrodipicolinate reductase from Bacillus cereus (strain Q1).